The chain runs to 481 residues: Aspartyl/glutamyl-tRNA(Asn/Gln) amidotransferase subunit B (481 aa).

Residues 29 to 50 (SSSKSSHTDPKNTNISPIDLGH) are disordered.

It belongs to the GatB/GatE family. GatB subfamily. In terms of assembly, heterotrimer of A, B and C subunits.

It carries out the reaction L-glutamyl-tRNA(Gln) + L-glutamine + ATP + H2O = L-glutaminyl-tRNA(Gln) + L-glutamate + ADP + phosphate + H(+). It catalyses the reaction L-aspartyl-tRNA(Asn) + L-glutamine + ATP + H2O = L-asparaginyl-tRNA(Asn) + L-glutamate + ADP + phosphate + 2 H(+). Allows the formation of correctly charged Asn-tRNA(Asn) or Gln-tRNA(Gln) through the transamidation of misacylated Asp-tRNA(Asn) or Glu-tRNA(Gln) in organisms which lack either or both of asparaginyl-tRNA or glutaminyl-tRNA synthetases. The reaction takes place in the presence of glutamine and ATP through an activated phospho-Asp-tRNA(Asn) or phospho-Glu-tRNA(Gln). This chain is Aspartyl/glutamyl-tRNA(Asn/Gln) amidotransferase subunit B, found in Malacoplasma penetrans (strain HF-2) (Mycoplasma penetrans).